Consider the following 307-residue polypeptide: Porphobilinogen deaminase (307 aa).

S-(dipyrrolylmethanemethyl)cysteine is present on cysteine 239.

This sequence belongs to the HMBS family. In terms of assembly, monomer. The cofactor is dipyrromethane.

It catalyses the reaction 4 porphobilinogen + H2O = hydroxymethylbilane + 4 NH4(+). The protein operates within porphyrin-containing compound metabolism; protoporphyrin-IX biosynthesis; coproporphyrinogen-III from 5-aminolevulinate: step 2/4. In terms of biological role, tetrapolymerization of the monopyrrole PBG into the hydroxymethylbilane pre-uroporphyrinogen in several discrete steps. The protein is Porphobilinogen deaminase of Campylobacter jejuni subsp. doylei (strain ATCC BAA-1458 / RM4099 / 269.97).